Reading from the N-terminus, the 212-residue chain is Deoxyribose-phosphate aldolase (212 aa).

Catalysis depends on D89, which acts as the Proton donor/acceptor. The active-site Schiff-base intermediate with acetaldehyde is the K151. Residue K180 is the Proton donor/acceptor of the active site.

This sequence belongs to the DeoC/FbaB aldolase family. DeoC type 1 subfamily.

The protein localises to the cytoplasm. It carries out the reaction 2-deoxy-D-ribose 5-phosphate = D-glyceraldehyde 3-phosphate + acetaldehyde. It functions in the pathway carbohydrate degradation; 2-deoxy-D-ribose 1-phosphate degradation; D-glyceraldehyde 3-phosphate and acetaldehyde from 2-deoxy-alpha-D-ribose 1-phosphate: step 2/2. In terms of biological role, catalyzes a reversible aldol reaction between acetaldehyde and D-glyceraldehyde 3-phosphate to generate 2-deoxy-D-ribose 5-phosphate. In Clostridium botulinum (strain Okra / Type B1), this protein is Deoxyribose-phosphate aldolase.